The chain runs to 533 residues: D-3-phosphoglycerate dehydrogenase (533 aa).

Alanine 2 is modified (N-acetylalanine). Serine 14 bears the Phosphoserine mark. Lysine 21 carries the N6-acetyllysine; alternate modification. Lysine 21 is covalently cross-linked (Glycyl lysine isopeptide (Lys-Gly) (interchain with G-Cter in SUMO1); alternate). Residue lysine 21 forms a Glycyl lysine isopeptide (Lys-Gly) (interchain with G-Cter in SUMO2); alternate linkage. N6-acetyllysine is present on lysine 58. Residues threonine 78, 155-156 (RI), aspartate 175, threonine 207, 234-236 (CAR), and aspartate 260 contribute to the NAD(+) site. A Phosphothreonine modification is found at threonine 78. The active site involves arginine 236. Glutamate 265 is a catalytic residue. The active-site Proton donor is the histidine 283. Position 283–286 (283–286 (HLGA)) interacts with NAD(+).

The protein belongs to the D-isomer specific 2-hydroxyacid dehydrogenase family. Homotetramer.

The enzyme catalyses (2R)-3-phosphoglycerate + NAD(+) = 3-phosphooxypyruvate + NADH + H(+). It catalyses the reaction (R)-2-hydroxyglutarate + NAD(+) = 2-oxoglutarate + NADH + H(+). It carries out the reaction (S)-malate + NAD(+) = oxaloacetate + NADH + H(+). Its pathway is amino-acid biosynthesis; L-serine biosynthesis; L-serine from 3-phospho-D-glycerate: step 1/3. Functionally, catalyzes the reversible oxidation of 3-phospho-D-glycerate to 3-phosphonooxypyruvate, the first step of the phosphorylated L-serine biosynthesis pathway. Also catalyzes the reversible oxidation of 2-hydroxyglutarate to 2-oxoglutarate and the reversible oxidation of (S)-malate to oxaloacetate. This chain is D-3-phosphoglycerate dehydrogenase (PHGDH), found in Homo sapiens (Human).